The sequence spans 145 residues: Catabolic 3-dehydroquinase (145 aa).

Y24 acts as the Proton acceptor in catalysis. 3 residues coordinate substrate: N77, H83, and D90. The active-site Proton donor is the H103. Residues 104–105 (IT) and R114 contribute to the substrate site.

It belongs to the type-II 3-dehydroquinase family. Homododecamer. Adopts a ring-like structure, composed of an arrangement of two hexameric rings stacked on top of one another.

It catalyses the reaction 3-dehydroquinate = 3-dehydroshikimate + H2O. It participates in aromatic compound metabolism; 3,4-dihydroxybenzoate biosynthesis; 3,4-dihydroxybenzoate from 3-dehydroquinate: step 1/2. Functionally, is involved in the catabolism of quinate. Allows the utilization of quinate as carbon source via the beta-ketoadipate pathway. This is Catabolic 3-dehydroquinase from Clavispora lusitaniae (strain ATCC 42720) (Yeast).